Consider the following 361-residue polypeptide: Mitogen-activated protein kinase 14 (361 aa).

In terms of domain architecture, Protein kinase spans 32–316 (YVPIKPIGRG…VSDALLHPYM (285 aa)). Residues 38–46 (IGRGAYGVV) and K61 contribute to the ATP site. Residue D158 is the Proton acceptor of the active site. Position 188 is a phosphothreonine (T188). The short motif at 188–190 (TEY) is the TXY element. At Y190 the chain carries Phosphotyrosine. The residue at position 193 (T193) is a Phosphothreonine.

Belongs to the protein kinase superfamily. CMGC Ser/Thr protein kinase family. MAP kinase subfamily. As to quaternary structure, interacts with MKK3. In terms of processing, dually phosphorylated on Thr-188 and Tyr-190, which activates the enzyme.

The catalysed reaction is L-seryl-[protein] + ATP = O-phospho-L-seryl-[protein] + ADP + H(+). It catalyses the reaction L-threonyl-[protein] + ATP = O-phospho-L-threonyl-[protein] + ADP + H(+). With respect to regulation, activated by threonine and tyrosine phosphorylation. This Arabidopsis thaliana (Mouse-ear cress) protein is Mitogen-activated protein kinase 14 (MPK14).